The primary structure comprises 912 residues: Rho guanine nucleotide exchange factor 1 (912 aa).

In terms of domain architecture, RGSL spans 41–232 (EQNSQFQSLE…GLYMRHLGVR (192 aa)). Positions 248–413 (KVMGNRRSDE…PDTLHSLPKS (166 aa)) are disordered. The span at 283-313 (DFRHLKAEVDAEKPGATDRKGGVGMPSRDRN) shows a compositional bias: basic and acidic residues. Positions 365 to 381 (STDEGAETESPEPGDEG) are enriched in acidic residues. A phosphoserine mark is found at S374 and S409. The region spanning 416–605 (KRQEVISELL…REILHHVNQA (190 aa)) is the DH domain. In terms of domain architecture, PH spans 647-760 (KLVHEGPLTW…WCALITETAG (114 aa)). T695 is subject to Phosphothreonine. The residue at position 738 (Y738) is a Phosphotyrosine; by JAK2. Disordered regions lie at residues 763 to 802 (KVPAPASRPKPRPSPSSTREPLLSSSENGNGGRETSPADA) and 841 to 865 (AEEDNGAGPPRDGDGVPGGGPLSPA). The segment covering 777 to 789 (PSSTREPLLSSSE) has biased composition (low complexity). Position 863 is a phosphoserine (S863). Residues 865–896 (ARTQEIQENLLSLEETMKQLEELEEEFCRLRP) adopt a coiled-coil conformation.

As to quaternary structure, interacts with RHOA, GNA12 and GNA13. Homooligomerizes through the coiled coil region. May interact with CCPG1. Interacts with CTNNAL1. Phosphorylated by PKCA. Angiotensin-2 induced Tyr-738 phosphorylation is mediated by JAK2. As to expression, ubiquitously expressed.

It localises to the cytoplasm. Its subcellular location is the membrane. Its function is as follows. Seems to play a role in the regulation of RhoA GTPase by guanine nucleotide-binding alpha-12 (GNA12) and alpha-13 (GNA13) subunits. Acts as a GTPase-activating protein (GAP) for GNA12 and GNA13, and as guanine nucleotide exchange factor (GEF) for RhoA GTPase. Activated G alpha 13/GNA13 stimulates the RhoGEF activity through interaction with the RGS-like domain. This GEF activity is inhibited by binding to activated GNA12. Mediates angiotensin-2-induced RhoA activation. In lymphoid follicles, may trigger activation of GNA13 as part of S1PR2-dependent signaling pathway that leads to inhibition of germinal center (GC) B cell growth and migration outside the GC niche. The polypeptide is Rho guanine nucleotide exchange factor 1 (ARHGEF1) (Homo sapiens (Human)).